We begin with the raw amino-acid sequence, 496 residues long: UDP-glycosyltransferase 73C3 (496 aa).

Residues Ser-297, 357-359 (APQ), 374-382 (HCGWNSTLE), and 396-399 (FGDQ) each bind UDP-alpha-D-glucose.

The protein belongs to the UDP-glycosyltransferase family.

This chain is UDP-glycosyltransferase 73C3 (UGT73C3), found in Arabidopsis thaliana (Mouse-ear cress).